The primary structure comprises 485 residues: Glutamate--tRNA ligase (485 aa).

The 'HIGH' region signature appears at 11-21; the sequence is PSPTGYMHVGN. Residues cysteine 108, cysteine 110, cysteine 135, and aspartate 137 each coordinate Zn(2+). A 'KMSKS' region motif is present at residues 252–256; sequence KLSKR. Position 255 (lysine 255) interacts with ATP.

Belongs to the class-I aminoacyl-tRNA synthetase family. Glutamate--tRNA ligase type 1 subfamily. As to quaternary structure, monomer. Zn(2+) is required as a cofactor.

The protein resides in the cytoplasm. The enzyme catalyses tRNA(Glu) + L-glutamate + ATP = L-glutamyl-tRNA(Glu) + AMP + diphosphate. Its function is as follows. Catalyzes the attachment of glutamate to tRNA(Glu) in a two-step reaction: glutamate is first activated by ATP to form Glu-AMP and then transferred to the acceptor end of tRNA(Glu). The chain is Glutamate--tRNA ligase from Clostridium botulinum (strain ATCC 19397 / Type A).